Consider the following 1989-residue polypeptide: Zinc finger C3H1 domain-containing protein (1989 aa).

4 disordered regions span residues 1-133, 148-218, 251-290, and 310-365; these read MATA…RPSF, GRPY…SKNE, SSKEENVQEDPKTLNFEDQTSTDNVSITKDSSKEVAPEEK, and LPGD…LGED. A2 is subject to N-acetylalanine. Residues S15, S28, and S34 each carry the phosphoserine modification. The segment covering 20-32 has biased composition (acidic residues); it reads GELEDGEISDDDN. Low complexity predominate over residues 33-44; it reads NSQIRSRSSSSS. Residues 62–72 show a composition bias toward gly residues; the sequence is RGGGSGGGGGS. 3 stretches are compositionally biased toward low complexity: residues 114–132, 183–192, and 201–210; these read PPSVRMPSSSLSESSPRPS, GFSSSQSWRE, and KSFGRSPSRK. S128 is subject to Phosphoserine. The stretch at 219 to 259 forms a coiled coil; it reads NCVEETFEDLLLKYKQIQLELECINKDEKLALSSKEENVQE. The residue at position 251 (S251) is a Phosphoserine. Residues 251–262 show a composition bias toward basic and acidic residues; that stretch reads SSKEENVQEDPK. The span at 266–279 shows a compositional bias: polar residues; it reads FEDQTSTDNVSITK. The span at 280–290 shows a compositional bias: basic and acidic residues; sequence DSSKEVAPEEK. The segment covering 330 to 340 has biased composition (polar residues); sequence KSDTTDSSQGL. A phosphoserine mark is found at S352 and S383. Residues 358–389 adopt a coiled-coil conformation; it reads SEKKLGEDEEELSELQLRLLALQSASKKWQQK. Disordered stretches follow at residues 385–671 and 711–770; these read KWQQ…SNLS and LNDS…PEAL. Residues 392–402 are compositionally biased toward basic and acidic residues; that stretch reads QVMKESKEKLT. A compositionally biased stretch (basic residues) spans 430–440; sequence ALRKQQTKAWK. Residues 432 to 487 adopt a coiled-coil conformation; sequence RKQQTKAWKKLQQQKEQERQKEEDQRKQAEEEERRKREEEIRKIRDLSNQEEQYNR. Composition is skewed to basic and acidic residues over residues 444 to 479 and 501 to 515; these read QQKEQERQKEEDQRKQAEEEERRKREEEIRKIRDLS and KSSDPDLRRSLDKQP. Positions 527-537 are enriched in acidic residues; that stretch reads NYEEVAMDTDS. Residues 574-583 are compositionally biased toward low complexity; that stretch reads VSSLPPLSQP. Positions 594–616 are enriched in pro residues; sequence PLPPLPPLPPLPPEDPEQPPKPP. Positions 647–671 are enriched in polar residues; it reads TSSNSDPPSPPVLNNSHPVPRSNLS. Phosphoserine is present on residues S662, S714, S717, and S719. The span at 755–770 shows a compositional bias: basic and acidic residues; sequence PKSEKENDPLRTPEAL. T766 is modified (phosphothreonine). Phosphoserine occurs at positions 805 and 809. Positions 847 to 909 form a coiled coil; the sequence is LKNLVQQEAK…QQRVTIKKAL (63 aa). Phosphoserine occurs at positions 948, 949, and 953. Residues 965–989 are a coiled coil; sequence EKRRLQKLEYEYALKIQKLKEARAL. Phosphoserine is present on residues S998 and S1046. Residues 1185–1206 form a C3H1-type zinc finger; the sequence is FCRFDLTGTCNDDDCQWQHIQD. A phosphoserine mark is found at S1301, S1303, and S1304. TPR repeat units follow at residues 1361 to 1400, 1401 to 1434, 1438 to 1471, 1478 to 1511, 1602 to 1635, 1636 to 1669, and 1745 to 1778; these read VQLWLKLAYKYLNQNEGECSESLDSALNVLARALENNKDN, PEIWCHYLRLFSKRGTKDEVQEMCETAVEYAPDY, WTFLHLESTFEEKDYVCERMLEFLMGAAKQETSN, LEALLFRVQLHIFTGRCQSALAILQNALKSANDG, LPLYTNMIALHQLLERYEAAMELCKSLLESCPIN, CQLLEALVALYLQTNQHDKARAVWLTAFEKNPQN, and PYLWLIYCLCHPLQSSIKETVEAYEAALGVAMRC.

In terms of assembly, component of the poly(A) tail exosome targeting (PAXT) complex made of accessory factors, such as PABPN1, ZFC3H1 and MTREX, and which directs a subset of long and polyadenylated poly(A) RNAs for exosomal degradation. Co-localizes with component of the CBC-ARS2 (CBCA) complex. Binds to RNA exosome components. Interacts with NCBP1/CBP80, ZC3H18, MTREX and PABPN1 in a RNase-insensitive manner, and with PABPC4, PABPC1 and ZC3H14 in a RNase-sensitive manner.

The protein resides in the nucleus. In terms of biological role, subunit of the trimeric poly(A) tail exosome targeting (PAXT) complex, a complex that directs a subset of long and polyadenylated poly(A) RNAs for exosomal degradation. The RNA exosome is fundamental for the degradation of RNA in eukaryotic nuclei. Substrate targeting is facilitated by its cofactor MTREX, which links to RNA-binding protein adapters. This is Zinc finger C3H1 domain-containing protein (ZFC3H1) from Homo sapiens (Human).